The chain runs to 39 residues: Photosystem II reaction center protein J (39 aa).

The helical transmembrane segment at 7 to 27 (IPLWLIATVGGTAALTVVGLF) threads the bilayer.

This sequence belongs to the PsbJ family. As to quaternary structure, PSII is composed of 1 copy each of membrane proteins PsbA, PsbB, PsbC, PsbD, PsbE, PsbF, PsbH, PsbI, PsbJ, PsbK, PsbL, PsbM, PsbT, PsbX, PsbY, PsbZ, Psb30/Ycf12, at least 3 peripheral proteins of the oxygen-evolving complex and a large number of cofactors. It forms dimeric complexes.

Its subcellular location is the plastid. It is found in the chloroplast thylakoid membrane. Its function is as follows. One of the components of the core complex of photosystem II (PSII). PSII is a light-driven water:plastoquinone oxidoreductase that uses light energy to abstract electrons from H(2)O, generating O(2) and a proton gradient subsequently used for ATP formation. It consists of a core antenna complex that captures photons, and an electron transfer chain that converts photonic excitation into a charge separation. In Rhodomonas salina (Cryptomonas salina), this protein is Photosystem II reaction center protein J.